A 305-amino-acid chain; its full sequence is Mitochondrial distribution and morphology protein 12 (305 aa).

One can recognise an SMP-LTD domain in the interval 1–236 (MSVEIDWDNI…WPSWIDLDFT (236 aa)). A disordered region spans residues 233–305 (LDFTPEDPED…RVNSNTSLEE (73 aa)). Residues 235-248 (FTPEDPEDPEEEGR) are compositionally biased toward acidic residues. Residues 258–269 (NDGKDIEMKSGT) are compositionally biased toward basic and acidic residues. Polar residues predominate over residues 279-305 (ESVQHVSPAVTSIDQESRVNSNTSLEE).

The protein belongs to the MDM12 family. As to quaternary structure, component of the ER-mitochondria encounter structure (ERMES) or MDM complex, composed of MMM1, MDM10, MDM12 and MDM34. An MMM1 homodimer associates with one molecule of MDM12 on each side in a pairwise head-to-tail manner, and the SMP-LTD domains of MMM1 and MDM12 generate a continuous hydrophobic tunnel for phospholipid trafficking.

The protein resides in the mitochondrion outer membrane. It is found in the endoplasmic reticulum membrane. Its function is as follows. Component of the ERMES/MDM complex, which serves as a molecular tether to connect the endoplasmic reticulum (ER) and mitochondria. Components of this complex are involved in the control of mitochondrial shape and protein biogenesis, and function in nonvesicular lipid trafficking between the ER and mitochondria. MDM12 is required for the interaction of the ER-resident membrane protein MMM1 and the outer mitochondrial membrane-resident beta-barrel protein MDM10. The MDM12-MMM1 subcomplex functions in the major beta-barrel assembly pathway that is responsible for biogenesis of all mitochondrial outer membrane beta-barrel proteins, and acts in a late step after the SAM complex. The MDM10-MDM12-MMM1 subcomplex further acts in the TOM40-specific pathway after the action of the MDM12-MMM1 complex. Essential for establishing and maintaining the structure of mitochondria and maintenance of mtDNA nucleoids. This is Mitochondrial distribution and morphology protein 12 from Kluyveromyces lactis (strain ATCC 8585 / CBS 2359 / DSM 70799 / NBRC 1267 / NRRL Y-1140 / WM37) (Yeast).